We begin with the raw amino-acid sequence, 276 residues long: Adenylate kinase (276 aa).

51 to 56 (GAGKGT) is a binding site for ATP. Residues 71–100 (ATGDMLRSQVAKKTPLGQAAKKIMDAGGLV) form an NMP region. AMP is bound by residues T72, R77, 98-100 (GLV), 127-130 (GFPR), and Q134. Residues 168-205 (GRLVHPASGRSYHVKFNPPKKEMTDDITGEPLIQRSDD) are LID. ATP is bound by residues R169 and 178–179 (SY). AMP contacts are provided by R202 and R213. Q241 is an ATP binding site.

Belongs to the adenylate kinase family. AK2 subfamily. As to quaternary structure, monomer.

The protein resides in the cytoplasm. Its subcellular location is the cytosol. It is found in the mitochondrion intermembrane space. The catalysed reaction is AMP + ATP = 2 ADP. Catalyzes the reversible transfer of the terminal phosphate group between ATP and AMP. Plays an important role in cellular energy homeostasis and in adenine nucleotide metabolism. Adenylate kinase activity is critical for regulation of the phosphate utilization and the AMP de novo biosynthesis pathways. The chain is Adenylate kinase from Podospora anserina (strain S / ATCC MYA-4624 / DSM 980 / FGSC 10383) (Pleurage anserina).